Consider the following 476-residue polypeptide: Aspartyl/glutamyl-tRNA(Asn/Gln) amidotransferase subunit B (476 aa).

Belongs to the GatB/GatE family. GatB subfamily. In terms of assembly, heterotrimer of A, B and C subunits.

The catalysed reaction is L-glutamyl-tRNA(Gln) + L-glutamine + ATP + H2O = L-glutaminyl-tRNA(Gln) + L-glutamate + ADP + phosphate + H(+). It catalyses the reaction L-aspartyl-tRNA(Asn) + L-glutamine + ATP + H2O = L-asparaginyl-tRNA(Asn) + L-glutamate + ADP + phosphate + 2 H(+). In terms of biological role, allows the formation of correctly charged Asn-tRNA(Asn) or Gln-tRNA(Gln) through the transamidation of misacylated Asp-tRNA(Asn) or Glu-tRNA(Gln) in organisms which lack either or both of asparaginyl-tRNA or glutaminyl-tRNA synthetases. The reaction takes place in the presence of glutamine and ATP through an activated phospho-Asp-tRNA(Asn) or phospho-Glu-tRNA(Gln). This Lactobacillus delbrueckii subsp. bulgaricus (strain ATCC 11842 / DSM 20081 / BCRC 10696 / JCM 1002 / NBRC 13953 / NCIMB 11778 / NCTC 12712 / WDCM 00102 / Lb 14) protein is Aspartyl/glutamyl-tRNA(Asn/Gln) amidotransferase subunit B.